The sequence spans 312 residues: Porphobilinogen deaminase (312 aa).

Cysteine 241 is modified (S-(dipyrrolylmethanemethyl)cysteine).

This sequence belongs to the HMBS family. Monomer. Dipyrromethane is required as a cofactor.

The catalysed reaction is 4 porphobilinogen + H2O = hydroxymethylbilane + 4 NH4(+). It participates in porphyrin-containing compound metabolism; protoporphyrin-IX biosynthesis; coproporphyrinogen-III from 5-aminolevulinate: step 2/4. In terms of biological role, tetrapolymerization of the monopyrrole PBG into the hydroxymethylbilane pre-uroporphyrinogen in several discrete steps. The chain is Porphobilinogen deaminase from Aliarcobacter butzleri (strain RM4018) (Arcobacter butzleri).